We begin with the raw amino-acid sequence, 263 residues long: Homeobox protein CDX-1 (263 aa).

Residues 47–108 (PGINSDPHHG…VQPPGSGLLP (62 aa)) form a disordered region. Residues 82-97 (SSANPTQIAFSPSDYN) are compositionally biased toward polar residues. Positions 150–209 (KDKYRVVYTDHQRLELEKEFHYSRYITIRRKAELAAALGLTERQVKIWFQNRRAKERKVN) form a DNA-binding region, homeobox. An interaction with DNA region spans residues 153 to 174 (YRVVYTDHQRLELEKEFHYSRY). The interaction with 5-mCpG DNA stretch occupies residues 192 to 203 (RQVKIWFQNRRA). Residues 204–213 (KERKVNKKKM) are compositionally biased toward basic residues. The segment at 204–263 (KERKVNKKKMQQQSQQASTTTPTPPSVGTTAGMGGLCSSSSSNSNLVSPSSMPIKEEYLS) is disordered. Composition is skewed to low complexity over residues 214–233 (QQQS…VGTT) and 241–254 (SSSS…SPSS).

Belongs to the Caudal homeobox family.

The protein localises to the nucleus. Functionally, plays a role in transcriptional regulation. Involved in activated KRAS-mediated transcriptional activation of PRKD1. Binds to the PRKD1 promoter. Could play a role in the terminal differentiation of the intestine. Binds preferentially to methylated DNA. The chain is Homeobox protein CDX-1 (cdx1) from Xenopus laevis (African clawed frog).